Here is a 499-residue protein sequence, read N- to C-terminus: MAMAEGERTECAETPRDEPPADGTLKRAEELKTQANDYFKAKDYENAIKFYSQAIELNPGNAIYYGNRSLAYLRTECYGYALGDATRAIELDKKYIKGYYRRAASNMALGKFRAALRDYETVVKVKPNDKDAKMKYQECSKIVKQKAFERAIAGDEHRRSVVDSLDIESMTIEDEYSGPKLEDGKVTITFMKDLMQWYKDQKKLHRKCAYQILVQVKEVLCKLSTLVETTLKETEKITVCGDTHGQFYDLLNIFELNGLPSETNPYIFNGDFVDRGSFSVEVILTLFGFKLLYPDHFHLLRGNHETDNMNQIYGFEGEVKAKYTAQMYELFSEVFEWLPLAQCINGKVLIMHGGLFSEDGVTLDDIRKIERNRQPPDSGPMCDLLWSDPQPQNGRSVSKRGVSCQFGPDVTKAFLEENQLDYIIRSHEVKAEGYEVAHGGRCVTVFSAPNYCDQMGNKASYIHLQGSDLRPQFHQFTAVPHPNVKPMAYANTLLQLGMM.

Residues 1–24 (MAMAEGERTECAETPRDEPPADGT) form a disordered region. Residue A2 is modified to N-acetylalanine. TPR repeat units follow at residues 28 to 61 (AEEL…NPGN), 62 to 95 (AIYY…DKKY), and 96 to 129 (IKGY…KPND). The catalytic stretch occupies residues 184 to 499 (GKVTITFMKD…ANTLLQLGMM (316 aa)). The Mn(2+) site is built by D242, H244, and D271. H244 is a binding site for substrate. Substrate contacts are provided by residues R275 and 303 to 304 (NH). N303 lines the Mn(2+) pocket. The Proton donor/acceptor role is filled by H304. H352 contributes to the Mn(2+) binding site. The substrate site is built by R400 and H427. H427 provides a ligand contact to Mn(2+). The tract at residues 495–499 (QLGMM) is required for autoinhibition.

Belongs to the PPP phosphatase family. PP-5 (PP-T) subfamily. In terms of assembly, probably forms a complex composed of chaperones HSP90 and HSP70, co-chaperones STIP1/HOP, CDC37, PPP5C, PTGES3/p23, TSC1 and client protein TSC2. Probably forms a complex composed of chaperones HSP90 and HSP70, co-chaperones CDC37, PPP5C, TSC1 and client protein TSC2, CDK4, AKT, RAF1 and NR3C1; this complex does not contain co-chaperones STIP1/HOP and PTGES3/p23. Part of a complex with HSP90/HSP90AA1 and steroid receptors. Interacts (via TPR repeats) with HSP90AA1 (via TPR repeat-binding motif) or HSPA1A/HSPA1B; the interaction is direct and activates the phosphatase activity. Dissociates from HSPA1A/HSPA1B and HSP90AA1 in response to arachidonic acid. Interacts with CPNE1 (via VWFA domain). Interacts with CDC16, CDC27. Interacts with KLHDC10 (via the 6 Kelch repeats); inhibits the phosphatase activity on MAP3K5. Interacts with ATM and ATR; both interactions are induced by DNA damage and enhance ATM and ATR kinase activity. Interacts with RAD17; reduced by DNA damage. Interacts with nuclear receptors such as NR3C1/GCR and PPARG (activated by agonist); regulates their transactivation activities. Interacts (via TPR repeats) with S100 proteins S100A1, S100A2, S100A6, S100B and S100P; the interactions are calcium-dependent, strongly activate PPP5C phosphatase activity and compete with HSP90AA1 and MAP3K5 interactions. Interacts with SMAD2 and SMAD3 but not with SMAD1; decreases SMAD3 phosphorylation and protein levels. Interacts (via TPR repeats) with CRY1 and CRY2; the interaction with CRY2 down-regulates the phosphatase activity on CSNK1E. Interacts (via TPR repeats) with the active form of RAC1, GNA12 or GNA13; these interactions activate the phosphatase activity and translocate PPP5C to the cell membrane. Interacts with FLCN. The cofactor is Mg(2+). Requires Mn(2+) as cofactor. Post-translationally, activated by at least two different proteolytic cleavages producing a 56 kDa and a 50 kDa form. As to expression, expressed in liver (at protein level) and brain, enriched in suprachiasmatic nuclei.

The protein localises to the nucleus. It localises to the cytoplasm. The protein resides in the cell membrane. The catalysed reaction is O-phospho-L-seryl-[protein] + H2O = L-seryl-[protein] + phosphate. It catalyses the reaction O-phospho-L-threonyl-[protein] + H2O = L-threonyl-[protein] + phosphate. Its activity is regulated as follows. Autoinhibited. In the autoinhibited state, the TPR domain interacts with the catalytic region and prevents substrate access to the catalytic pocket. Allosterically activated by various polyunsaturated fatty acids, free long-chain fatty-acids and long-chain fatty acyl-CoA esters, arachidonic acid being the most effective activator. HSP90A and probably RAC1, GNA12 and GNA13 can also release the autoinhibition by the TPR repeat. Activation by RAC1, GNA12 and GNA13 is synergistic with the one produced by fatty acids binding. Inhibited by okadaic acid. Its function is as follows. Serine/threonine-protein phosphatase that dephosphorylates a myriad of proteins involved in different signaling pathways including the kinases CSNK1E, ASK1/MAP3K5, PRKDC and RAF1, the nuclear receptors NR3C1, PPARG, ESR1 and ESR2, SMAD proteins and TAU/MAPT. Implicated in wide ranging cellular processes, including apoptosis, differentiation, DNA damage response, cell survival, regulation of ion channels or circadian rhythms, in response to steroid and thyroid hormones, calcium, fatty acids, TGF-beta as well as oxidative and genotoxic stresses. Participates in the control of DNA damage response mechanisms such as checkpoint activation and DNA damage repair through, for instance, the regulation ATM/ATR-signaling and dephosphorylation of PRKDC and TP53BP1. Inhibits ASK1/MAP3K5-mediated apoptosis induced by oxidative stress. Plays a positive role in adipogenesis, mainly through the dephosphorylation and activation of PPARG transactivation function. Also dephosphorylates and inhibits the anti-adipogenic effect of NR3C1. Regulates the circadian rhythms, through the dephosphorylation and activation of CSNK1E. May modulate TGF-beta signaling pathway by the regulation of SMAD3 phosphorylation and protein expression levels. Dephosphorylates and may play a role in the regulation of TAU/MAPT. Through their dephosphorylation, may play a role in the regulation of ions channels such as KCNH2. Dephosphorylate FNIP1, disrupting interaction with HSP90AA1/Hsp90. The sequence is that of Serine/threonine-protein phosphatase 5 (Ppp5c) from Mus musculus (Mouse).